Consider the following 349-residue polypeptide: MSLVGVHNEWDPLEEVVVGTARRPCAGPDRSLLAVEYAEYAGPGRWQEVPTGPYPDRALKETEDELEELCEELRGLGVTVRRPGARDSAAPVRTPDWESDGYGDLCPRDGLLVVGDTVIEAPMALRARFLESLAYKELLVEYLAAGSRWISAPKPRLAEGMYSPSGPSGERLRDLEPVFDAANVLRLGTDLLYLVSDSGNELGARWLQSALGAAYTVHPCRGLYSSTHIDSTLVPLRPGLVLVNPARVTDDNLPGVLRTWQRIECPALAGLGYAGDVPHCSTWIGMSLLVVRPGLVVVDSRHRELMRVLERHGVDVLPLKLTHARMLGGGFHGVTLDIRRTGALETYRF.

It belongs to the amidinotransferase family.

It catalyses the reaction 1-amino-1-deoxy-scyllo-inositol 4-phosphate + L-arginine = 1-guanidino-1-deoxy-scyllo-inositol 4-phosphate + L-ornithine. It participates in antibiotic biosynthesis; streptomycin biosynthesis. Functionally, it is not obvious if strB2 participates in streptomycin biosynthesis as an inosamine-phosphate amidinotransferase. Attempt to measure its activity have failed and the nucleophilic cysteine which is the key residue for amidine transfer is not conserved but replaced by a glycine residue. This Streptomyces griseus protein is Putative inosamine-phosphate amidinotransferase 2 (strB2).